Here is a 116-residue protein sequence, read N- to C-terminus: Heme-degrading monooxygenase (116 aa).

The region spanning 2–92 (VIVTNTSKIT…EYILENKISF (91 aa)) is the ABM domain. Residue Asn6 coordinates Fe cation. Heme is bound at residue His76.

This sequence belongs to the antibiotic biosynthesis monooxygenase family. Heme-degrading monooxygenase IsdG subfamily. In terms of assembly, homodimer.

The protein localises to the cytoplasm. The enzyme catalyses heme b + 3 reduced [NADPH--hemoprotein reductase] + 3 O2 = biliverdin IXalpha + CO + Fe(2+) + 3 oxidized [NADPH--hemoprotein reductase] + 3 H2O + H(+). Functionally, allows bacterial pathogens to use the host heme as an iron source. Catalyzes the oxidative degradation of the heme macrocyclic porphyrin ring to the biliverdin in the presence of a suitable electron donor such as ascorbate or NADPH--cytochrome P450 reductase, with subsequent release of free iron. This Halalkalibacterium halodurans (strain ATCC BAA-125 / DSM 18197 / FERM 7344 / JCM 9153 / C-125) (Bacillus halodurans) protein is Heme-degrading monooxygenase.